Here is a 362-residue protein sequence, read N- to C-terminus: Solute carrier family 25 member 3 (362 aa).

Residues Met1–Ala49 constitute a mitochondrion transit peptide. At Ala50–Arg63 the chain is on the mitochondrial intermembrane side. Solcar repeat units lie at residues Arg63–Leu147, Trp160–Ala244, and Glu261–Tyr339. A helical transmembrane segment spans residues Phe64 to Leu86. Residues Asp87 to Lys121 are Mitochondrial matrix-facing. At Lys99 the chain carries N6-acetyllysine. Lys112 carries the N6-methyllysine modification. Residues Gly122–Tyr141 form a helical membrane-spanning segment. At Glu142 to Arg161 the chain is on the mitochondrial intermembrane side. A helical membrane pass occupies residues Thr162–Met183. At Glu184–Lys218 the chain is on the mitochondrial matrix side. Tyr196 bears the Phosphotyrosine mark. Lys209 is modified (N6-acetyllysine). A helical transmembrane segment spans residues Gly219–Phe238. The Mitochondrial intermembrane segment spans residues Glu239–Glu261. The chain crosses the membrane as a helical span at residues Gln262 to Ala284. Over Asp285 to Gly314 the chain is Mitochondrial matrix. The helical transmembrane segment at Leu315–Tyr333 threads the bilayer. At Asp334–Gln362 the chain is on the mitochondrial intermembrane side.

The protein belongs to the mitochondrial carrier (TC 2.A.29) family. As to quaternary structure, interacts with PPIF; the interaction is impaired by CsA.

The protein resides in the mitochondrion inner membrane. It catalyses the reaction phosphate(in) + H(+)(in) = phosphate(out) + H(+)(out). Inorganic ion transporter that transports phosphate or copper ions across the mitochondrial inner membrane into the matrix compartment. Mediates proton-coupled symport of phosphate ions necessary for mitochondrial oxidative phosphorylation of ADP to ATP. Transports copper ions probably in the form of anionic copper(I) complexes to maintain mitochondrial matrix copper pool and to supply copper for cytochrome C oxidase complex assembly. May also play a role in regulation of the mitochondrial permeability transition pore (mPTP). This Homo sapiens (Human) protein is Solute carrier family 25 member 3.